Here is a 308-residue protein sequence, read N- to C-terminus: MAKENPPIVFGPVLSRRFGKSLGVDLSPSKKQCNYNCIYCELGKAKPIERMEEVIKVETLINAIQNALNNLTTPIDVLTITANGEPTLYPHLLELIQSIKPFLKGVKTLILSNGSLFYEPKVQQALKEFDIVKFSLDAIDLKAFERVDKPYSKDINKILEGILRFSQIYQGQLVAEVLLIKGVNDSANNLKLIAAFLKQINIARVDLSTIDRPSSFKAPKLSEDELLKCSLFFEGLCVSLPKRSITQAKKLISCGIDELLALISRRPLSAEEAPLILDSNAFKHLETLLNHKQITIKKVGSLEFYCAF.

Positions 18–248 (FGKSLGVDLS…SLPKRSITQA (231 aa)) constitute a Radical SAM core domain. Positions 33, 37, and 40 each coordinate [4Fe-4S] cluster.

The protein belongs to the UPF0026 family. Requires [4Fe-4S] cluster as cofactor.

In Helicobacter pylori (strain ATCC 700392 / 26695) (Campylobacter pylori), this protein is UPF0026 protein HP_0117.